The chain runs to 161 residues: Protein-export protein SecB (161 aa).

Positions 141–161 (KKQQETAGEQPDQPADTITRH) are disordered.

This sequence belongs to the SecB family. In terms of assembly, homotetramer, a dimer of dimers. One homotetramer interacts with 1 SecA dimer.

It is found in the cytoplasm. In terms of biological role, one of the proteins required for the normal export of preproteins out of the cell cytoplasm. It is a molecular chaperone that binds to a subset of precursor proteins, maintaining them in a translocation-competent state. It also specifically binds to its receptor SecA. The protein is Protein-export protein SecB of Nitrosomonas europaea (strain ATCC 19718 / CIP 103999 / KCTC 2705 / NBRC 14298).